A 284-amino-acid polypeptide reads, in one-letter code: 2-dehydro-3-deoxyphosphooctonate aldolase (284 aa).

It belongs to the KdsA family.

Its subcellular location is the cytoplasm. It catalyses the reaction D-arabinose 5-phosphate + phosphoenolpyruvate + H2O = 3-deoxy-alpha-D-manno-2-octulosonate-8-phosphate + phosphate. The protein operates within carbohydrate biosynthesis; 3-deoxy-D-manno-octulosonate biosynthesis; 3-deoxy-D-manno-octulosonate from D-ribulose 5-phosphate: step 2/3. It participates in bacterial outer membrane biogenesis; lipopolysaccharide biosynthesis. This chain is 2-dehydro-3-deoxyphosphooctonate aldolase, found in Haemophilus influenzae (strain PittEE).